The chain runs to 512 residues: Maturase K (512 aa).

It belongs to the intron maturase 2 family. MatK subfamily.

Its subcellular location is the plastid. It is found in the chloroplast. Functionally, usually encoded in the trnK tRNA gene intron. Probably assists in splicing its own and other chloroplast group II introns. This is Maturase K from Lilium tsingtauense (Twilight lily).